Reading from the N-terminus, the 1002-residue chain is Eukaryotic translation initiation factor 5B (1002 aa).

2 disordered regions span residues 1 to 172 (MAKK…GLAA) and 184 to 402 (EEQE…NKKD). Positions 13–23 (WDEEFEEDAAQ) are enriched in acidic residues. Polar residues predominate over residues 27–37 (ISATPTPNPES). Residues 47 to 57 (EASASAEGAEA) show a composition bias toward low complexity. Composition is skewed to basic and acidic residues over residues 75-111 (KKVI…EQAA) and 120-154 (QKEK…ESDK). A compositionally biased stretch (low complexity) spans 155-172 (PSASAKKPAKKVPAGLAA). Basic and acidic residues-rich tracts occupy residues 184-252 (EEQE…ERRR) and 267-276 (AKKDGEENKP). The segment covering 277 to 287 (KKVVYSKKKKR) has biased composition (basic residues). Basic and acidic residues predominate over residues 297 to 306 (IKSDSKKDSE). Composition is skewed to acidic residues over residues 307-342 (VVPD…EETQ) and 352-370 (DQNQ…EEEE). A compositionally biased stretch (low complexity) spans 381–398 (STPAATPAATPTPSSASP). A tr-type G domain is found at 403–621 (LRSPICCILG…LLELTQKRMS (219 aa)). Phosphoserine is present on Ser-405. Residues 412–419 (GHVDTGKT) form a G1 region. K(+) is bound at residue Asp-415. Asp-415 lines the Na(+) pocket. GTP contacts are provided by residues 415–420 (DTGKTK), Gln-431, and 437–439 (GIT). Thr-419 contributes to the Mg(2+) binding site. Gly-437 serves as a coordination point for K(+). Gly-437 contacts Na(+). A G2 region spans residues 437–441 (GITQQ). Thr-439 lines the Mg(2+) pocket. A G3 region spans residues 476-479 (DTPG). GTP is bound by residues 530–533 (NKID) and 599–600 (AV). The segment at 530-533 (NKID) is G4. The segment at 598–600 (SAV) is G5.

Belongs to the TRAFAC class translation factor GTPase superfamily. Classic translation factor GTPase family. IF-2 subfamily. Na(+) serves as cofactor. Requires K(+) as cofactor.

Its subcellular location is the cytoplasm. It catalyses the reaction GTP + H2O = GDP + phosphate + H(+). In terms of biological role, plays a role in translation initiation. Translational GTPase that catalyzes the joining of the 40S and 60S subunits to form the 80S initiation complex with the initiator methionine-tRNA in the P-site base paired to the start codon. GTP binding and hydrolysis induces conformational changes in the enzyme that renders it active for productive interactions with the ribosome. The release of the enzyme after formation of the initiation complex is a prerequisite to form elongation-competent ribosomes. Stimulates 20S pre-rRNA cleavage to mature 18S rRNA by PIN-domain endonuclease NOB1. The protein is Eukaryotic translation initiation factor 5B of Saccharomyces cerevisiae (strain ATCC 204508 / S288c) (Baker's yeast).